Consider the following 851-residue polypeptide: Leucine--tRNA ligase (851 aa).

The short motif at 51-61 (PYPSGDLHMGH) is the 'HIGH' region element. Positions 615-619 (KMSKS) match the 'KMSKS' region motif. K618 is an ATP binding site.

This sequence belongs to the class-I aminoacyl-tRNA synthetase family.

The protein localises to the cytoplasm. The enzyme catalyses tRNA(Leu) + L-leucine + ATP = L-leucyl-tRNA(Leu) + AMP + diphosphate. This is Leucine--tRNA ligase from Clavibacter michiganensis subsp. michiganensis (strain NCPPB 382).